A 153-amino-acid polypeptide reads, in one-letter code: Regulatory protein RecX (153 aa).

Belongs to the RecX family.

It localises to the cytoplasm. In terms of biological role, modulates RecA activity. The sequence is that of Regulatory protein RecX from Vibrio vulnificus (strain CMCP6).